Consider the following 229-residue polypeptide: tRNA (guanine-N(7)-)-methyltransferase (229 aa).

S-adenosyl-L-methionine is bound by residues Glu59, Glu84, Asp111, and Asp134. Residue Asp134 is part of the active site. Substrate-binding positions include Lys138, Asp170, and 205 to 208 (TKFE).

It belongs to the class I-like SAM-binding methyltransferase superfamily. TrmB family.

The enzyme catalyses guanosine(46) in tRNA + S-adenosyl-L-methionine = N(7)-methylguanosine(46) in tRNA + S-adenosyl-L-homocysteine. It functions in the pathway tRNA modification; N(7)-methylguanine-tRNA biosynthesis. Catalyzes the formation of N(7)-methylguanine at position 46 (m7G46) in tRNA. In Nitrosospira multiformis (strain ATCC 25196 / NCIMB 11849 / C 71), this protein is tRNA (guanine-N(7)-)-methyltransferase.